Consider the following 85-residue polypeptide: ATP synthase subunit c (85 aa).

The next 2 helical transmembrane spans lie at 19–39 (LGAA…IGKI) and 62–82 (IIAA…CLLV).

The protein belongs to the ATPase C chain family. In terms of assembly, F-type ATPases have 2 components, F(1) - the catalytic core - and F(0) - the membrane proton channel. F(1) has five subunits: alpha(3), beta(3), gamma(1), delta(1), epsilon(1). F(0) has three main subunits: a(1), b(2) and c(10-14). The alpha and beta chains form an alternating ring which encloses part of the gamma chain. F(1) is attached to F(0) by a central stalk formed by the gamma and epsilon chains, while a peripheral stalk is formed by the delta and b chains.

It localises to the cell inner membrane. In terms of biological role, f(1)F(0) ATP synthase produces ATP from ADP in the presence of a proton or sodium gradient. F-type ATPases consist of two structural domains, F(1) containing the extramembraneous catalytic core and F(0) containing the membrane proton channel, linked together by a central stalk and a peripheral stalk. During catalysis, ATP synthesis in the catalytic domain of F(1) is coupled via a rotary mechanism of the central stalk subunits to proton translocation. Its function is as follows. Key component of the F(0) channel; it plays a direct role in translocation across the membrane. A homomeric c-ring of between 10-14 subunits forms the central stalk rotor element with the F(1) delta and epsilon subunits. This is ATP synthase subunit c from Bacteroides fragilis (strain ATCC 25285 / DSM 2151 / CCUG 4856 / JCM 11019 / LMG 10263 / NCTC 9343 / Onslow / VPI 2553 / EN-2).